The sequence spans 146 residues: Large ribosomal subunit protein uL15 (146 aa).

A compositionally biased stretch (basic and acidic residues) spans 1–18 (MKLHELKPSEGSRKERNR). Positions 1–50 (MKLHELKPSEGSRKERNRVGRGTGSGNGKTSGRGHKGQKARSGGGVRLGF) are disordered. Gly residues predominate over residues 21–31 (RGTGSGNGKTS).

This sequence belongs to the universal ribosomal protein uL15 family. As to quaternary structure, part of the 50S ribosomal subunit.

Functionally, binds to the 23S rRNA. The sequence is that of Large ribosomal subunit protein uL15 from Listeria welshimeri serovar 6b (strain ATCC 35897 / DSM 20650 / CCUG 15529 / CIP 8149 / NCTC 11857 / SLCC 5334 / V8).